A 909-amino-acid polypeptide reads, in one-letter code: Disintegrin and metalloproteinase domain-containing protein 12 (909 aa).

Residues 1–28 (MAARPLPVSPARALLLALAGALLAPCEA) form the signal peptide. The propeptide occupies 29 to 207 (RGVSLWNQGR…SQTWARRHKR (179 aa)). Asn-111 and Asn-149 each carry an N-linked (GlcNAc...) asparagine glycan. The Cysteine switch signature appears at 177–184 (GSCGSHHN). The Zn(2+) site is built by Cys-179 and His-350. Over 208-708 (ETLKATKYVE…GPIRQADNQG (501 aa)) the chain is Extracellular. The Peptidase M12B domain occupies 214–416 (KYVELVIVAD…GMGVCLFNLP (203 aa)). Cystine bridges form between Cys-325/Cys-411, Cys-367/Cys-395, and Cys-369/Cys-378. Glu-351 is an active-site residue. Residues His-354 and His-360 each coordinate Zn(2+). N-linked (GlcNAc...) asparagine glycans are attached at residues Asn-381 and Asn-452. One can recognise a Disintegrin domain in the interval 424–510 (GQKCGNRFVE…HCPANVYLHD (87 aa)). The cysteines at positions 482 and 502 are disulfide-linked. Asn-651 is a glycosylation site (N-linked (GlcNAc...) asparagine). The EGF-like domain maps to 656 to 688 (GVHECAMQCHGRGVCNNRKNCHCEAHWAPPFCD). Cystine bridges form between Cys-660–Cys-670, Cys-664–Cys-676, and Cys-678–Cys-687. A helical membrane pass occupies residues 709–729 (LTIGILVTILCLLAAGFVVYL). The Cytoplasmic segment spans residues 730–909 (KRKTLIRLLF…PRSTHTAYIK (180 aa)). Positions 822-862 (LHRAPRAPSVPARPLPAKPALRQAQGTCKPNPPQKPLPADP) are disordered. Residues 828 to 834 (APSVPAR) carry the SH3-binding; class II motif. The SH3-binding; class I motif lies at 834–841 (RPLPAKPA). Positions 851–860 (PNPPQKPLPA) are enriched in pro residues. Residues 885 to 891 (RLAPLRP) carry the SH3-binding; class I motif. Tyr-907 carries the post-translational modification Phosphotyrosine; by SRC.

In terms of assembly, interacts with alpha-actinin-2 and with syndecans. Interacts with SH3PXD2A. Interacts with FST3. Interacts with RACK1; the interaction is required for PKC-dependent translocation of ADAM12 to the cell membrane. The cofactor is Zn(2+). In terms of processing, the precursor is cleaved by a furin endopeptidase. As to expression, isoform 1 is expressed in placenta and skeletal, cardiac, and smooth muscle. Isoform 2 seems to be expressed only in placenta or in embryo and fetus. Both forms were expressed in some tumor cells lines. Not detected in brain, lung, liver, kidney or pancreas.

Its subcellular location is the cell membrane. The protein localises to the secreted. Functionally, involved in skeletal muscle regeneration, specifically at the onset of cell fusion. Also involved in macrophage-derived giant cells (MGC) and osteoclast formation from mononuclear precursors. The protein is Disintegrin and metalloproteinase domain-containing protein 12 (ADAM12) of Homo sapiens (Human).